The following is a 283-amino-acid chain: Bis(5'-nucleosyl)-tetraphosphatase, symmetrical (283 aa).

Belongs to the Ap4A hydrolase family.

It carries out the reaction P(1),P(4)-bis(5'-adenosyl) tetraphosphate + H2O = 2 ADP + 2 H(+). Its function is as follows. Hydrolyzes diadenosine 5',5'''-P1,P4-tetraphosphate to yield ADP. The chain is Bis(5'-nucleosyl)-tetraphosphatase, symmetrical from Pseudomonas fluorescens (strain SBW25).